A 634-amino-acid polypeptide reads, in one-letter code: Chaperone protein HtpG (634 aa).

The interval 1–342 (MTVASHKETL…SNDLPLNISR (342 aa)) is a; substrate-binding. Residues 343–559 (EILQNNRVID…QHDMSGYLER (217 aa)) form a b region. The c stretch occupies residues 560-634 (LLKEAGQQAP…LNSLLLAMAD (75 aa)).

Belongs to the heat shock protein 90 family. As to quaternary structure, homodimer.

Its subcellular location is the cytoplasm. In terms of biological role, molecular chaperone. Has ATPase activity. This Nitrosococcus oceani (strain ATCC 19707 / BCRC 17464 / JCM 30415 / NCIMB 11848 / C-107) protein is Chaperone protein HtpG.